A 468-amino-acid polypeptide reads, in one-letter code: Maltose fermentation regulatory protein MAL33 (468 aa).

Residues 8–34 (CDYCRVRRVKCDGKKPCSRCIEHNFDC) constitute a DNA-binding region (zn(2)-C6 fungal-type). The short motif at 41 to 49 (KKRGSKPIG) is the Nuclear localization signal element.

It belongs to the MAL13 family.

The protein resides in the nucleus. Functionally, regulates the coordinate transcription of structural MAL3S (maltase) and MAL3T (maltose permease) genes. This chain is Maltose fermentation regulatory protein MAL33 (MAL33), found in Saccharomyces cerevisiae (strain ATCC 204508 / S288c) (Baker's yeast).